The sequence spans 547 residues: Germacrene A synthase (547 aa).

Residues D300, D304, D443, and E451 each contribute to the Mg(2+) site. The DDXXD motif signature appears at D300–D304.

It belongs to the terpene synthase family. Tpsa subfamily. Mg(2+) is required as a cofactor. Mn(2+) serves as cofactor. Expressed in leaves.

It is found in the plastid. The protein localises to the chloroplast. It carries out the reaction (2E,6E)-farnesyl diphosphate = germacrene A + diphosphate. It catalyses the reaction (2E,6E)-farnesyl diphosphate = (1S,2S,4R)-beta-elemene + diphosphate. The protein operates within secondary metabolite biosynthesis; terpenoid biosynthesis. Its function is as follows. Sesquiterpene synthase involved in the biosynthesis of volatile compounds widely used in aromatherapy and folk medicine, and present in culinary herbs. Mediates the conversion of (2E,6E)-farnesyl diphosphate (FPP) into germacrene A and beta-elemene. Not able to use (2E)-geranyl diphosphate (GPP) as substrate. This chain is Germacrene A synthase, found in Lavandula pedunculata subsp. lusitanica (French lavender).